We begin with the raw amino-acid sequence, 336 residues long: GTPase Obg (336 aa).

The Obg domain maps to 1–159 (MKFLDETKVY…KTIWLRLKLI (159 aa)). The OBG-type G domain maps to 160–327 (ADAGLVGLPN…ALRALRSVIA (168 aa)). GTP contacts are provided by residues 166–173 (GLPNAGKS), 191–195 (FTTLH), 212–215 (DIPG), 279–282 (SQID), and 308–310 (SAV). Mg(2+)-binding residues include S173 and T193.

It belongs to the TRAFAC class OBG-HflX-like GTPase superfamily. OBG GTPase family. As to quaternary structure, monomer. Mg(2+) is required as a cofactor.

Its subcellular location is the cytoplasm. An essential GTPase which binds GTP, GDP and possibly (p)ppGpp with moderate affinity, with high nucleotide exchange rates and a fairly low GTP hydrolysis rate. Plays a role in control of the cell cycle, stress response, ribosome biogenesis and in those bacteria that undergo differentiation, in morphogenesis control. In Rhizobium meliloti (strain 1021) (Ensifer meliloti), this protein is GTPase Obg.